A 132-amino-acid chain; its full sequence is Small ribosomal subunit protein uS8 (132 aa).

This sequence belongs to the universal ribosomal protein uS8 family. As to quaternary structure, part of the 30S ribosomal subunit. Contacts proteins S5 and S12.

Functionally, one of the primary rRNA binding proteins, it binds directly to 16S rRNA central domain where it helps coordinate assembly of the platform of the 30S subunit. The sequence is that of Small ribosomal subunit protein uS8 from Maricaulis maris (strain MCS10) (Caulobacter maris).